The primary structure comprises 691 residues: Protein-glutamine gamma-glutamyltransferase E (691 aa).

At tyrosine 110 the chain carries Phosphotyrosine. Position 111 is a phosphothreonine (threonine 111). 4 residues coordinate Ca(2+): alanine 221, asparagine 224, asparagine 226, and aspartate 227. Cysteine 272 is an active-site residue. Positions 301, 303, 305, 307, and 324 each coordinate Ca(2+). Active-site residues include histidine 330 and aspartate 353. Residues asparagine 393, threonine 414, glutamate 442, and glutamate 447 each coordinate Ca(2+).

This sequence belongs to the transglutaminase superfamily. Transglutaminase family. In terms of assembly, consists of two polypeptide chains, which are synthesized as a precursor form of a single polypeptide. Requires Ca(2+) as cofactor. Post-translationally, activated by proteolytic processing. In vitro activation is commonly achieved by cleavage with dispase, a neutral bacterial protease. Physiological activation may be catalyzed by CTSL and, to a lesser extent, by CTSS.

It localises to the cytoplasm. It catalyses the reaction L-glutaminyl-[protein] + L-lysyl-[protein] = [protein]-L-lysyl-N(6)-5-L-glutamyl-[protein] + NH4(+). In terms of biological role, catalyzes the calcium-dependent formation of isopeptide cross-links between glutamine and lysine residues in various proteins, as well as the conjugation of polyamines to proteins. Involved in the formation of the cornified envelope (CE), a specialized component consisting of covalent cross-links of proteins beneath the plasma membrane of terminally differentiated keratinocytes. Catalyzes small proline-rich proteins and LOR cross-linking to form small interchain oligomers, which are further cross-linked by TGM1 onto the growing CE scaffold. In hair follicles, involved in cross-linking structural proteins to hardening the inner root sheath. The sequence is that of Protein-glutamine gamma-glutamyltransferase E (TGM3) from Bos taurus (Bovine).